The following is a 248-amino-acid chain: 2,3-bisphosphoglycerate-dependent phosphoglycerate mutase (248 aa).

Substrate contacts are provided by residues 8–15, 21–22, arginine 60, 87–90, lysine 98, 114–115, and 183–184; these read RHGESTWN, TG, ERHY, RR, and GN. The active-site Tele-phosphohistidine intermediate is the histidine 9. The active-site Proton donor/acceptor is the glutamate 87.

The protein belongs to the phosphoglycerate mutase family. BPG-dependent PGAM subfamily. In terms of assembly, homodimer.

The enzyme catalyses (2R)-2-phosphoglycerate = (2R)-3-phosphoglycerate. It participates in carbohydrate degradation; glycolysis; pyruvate from D-glyceraldehyde 3-phosphate: step 3/5. Its function is as follows. Catalyzes the interconversion of 2-phosphoglycerate and 3-phosphoglycerate. The sequence is that of 2,3-bisphosphoglycerate-dependent phosphoglycerate mutase from Burkholderia cenocepacia (strain ATCC BAA-245 / DSM 16553 / LMG 16656 / NCTC 13227 / J2315 / CF5610) (Burkholderia cepacia (strain J2315)).